Here is an 864-residue protein sequence, read N- to C-terminus: Protein translocase subunit SecA (864 aa).

ATP is bound by residues Gln87, 105–109 (GEGKT), and Asp512.

The protein belongs to the SecA family. Monomer and homodimer. Part of the essential Sec protein translocation apparatus which comprises SecA, SecYEG and auxiliary proteins SecDF-YajC and YidC.

The protein resides in the cell inner membrane. It localises to the cytoplasm. The enzyme catalyses ATP + H2O + cellular proteinSide 1 = ADP + phosphate + cellular proteinSide 2.. Functionally, part of the Sec protein translocase complex. Interacts with the SecYEG preprotein conducting channel. Has a central role in coupling the hydrolysis of ATP to the transfer of proteins into and across the cell membrane, serving as an ATP-driven molecular motor driving the stepwise translocation of polypeptide chains across the membrane. The protein is Protein translocase subunit SecA of Buchnera aphidicola subsp. Cinara cedri (strain Cc).